Consider the following 163-residue polypeptide: NADH-quinone oxidoreductase subunit I (163 aa).

4Fe-4S ferredoxin-type domains lie at 54-84 (LRRY…IESD) and 94-123 (TRYD…ETPI). Residues Cys64, Cys67, Cys70, Cys74, Cys103, Cys106, Cys109, and Cys113 each contribute to the [4Fe-4S] cluster site.

This sequence belongs to the complex I 23 kDa subunit family. NDH-1 is composed of 14 different subunits. Subunits NuoA, H, J, K, L, M, N constitute the membrane sector of the complex. It depends on [4Fe-4S] cluster as a cofactor.

It localises to the cell inner membrane. It carries out the reaction a quinone + NADH + 5 H(+)(in) = a quinol + NAD(+) + 4 H(+)(out). NDH-1 shuttles electrons from NADH, via FMN and iron-sulfur (Fe-S) centers, to quinones in the respiratory chain. The immediate electron acceptor for the enzyme in this species is believed to be ubiquinone. Couples the redox reaction to proton translocation (for every two electrons transferred, four hydrogen ions are translocated across the cytoplasmic membrane), and thus conserves the redox energy in a proton gradient. In Cupriavidus pinatubonensis (strain JMP 134 / LMG 1197) (Cupriavidus necator (strain JMP 134)), this protein is NADH-quinone oxidoreductase subunit I.